Consider the following 348-residue polypeptide: sn-glycerol-3-phosphate import ATP-binding protein UgpC 3 (348 aa).

The ABC transporter domain occupies 4 to 234 (INIIDVKKNY…PASLFVASFI (231 aa)). 36-43 (GPSGCGKS) is a binding site for ATP.

This sequence belongs to the ABC transporter superfamily. sn-glycerol-3-phosphate importer (TC 3.A.1.1.3) family. The complex is composed of two ATP-binding proteins (UgpC), two transmembrane proteins (UgpA and UgpE) and a solute-binding protein (UgpB).

The protein localises to the cell inner membrane. The enzyme catalyses sn-glycerol 3-phosphate(out) + ATP + H2O = sn-glycerol 3-phosphate(in) + ADP + phosphate + H(+). Part of the ABC transporter complex UgpBAEC involved in sn-glycerol-3-phosphate (G3P) import. Responsible for energy coupling to the transport system. The protein is sn-glycerol-3-phosphate import ATP-binding protein UgpC 3 of Rhizobium johnstonii (strain DSM 114642 / LMG 32736 / 3841) (Rhizobium leguminosarum bv. viciae).